Reading from the N-terminus, the 1520-residue chain is Accessory colonization factor AcfD (1520 aa).

The N-terminal stretch at 1 to 16 is a signal peptide; sequence MKIRIVSLIVLGFLIG. A lipid anchor (N-palmitoyl cysteine) is attached at cysteine 17. The S-diacylglycerol cysteine moiety is linked to residue cysteine 17. Residues 1085 to 1388 form the Peptidase M60 domain; that stretch reads GNRQPTGQWA…MFAQLKEWAE (304 aa).

It localises to the cell membrane. This is Accessory colonization factor AcfD (acfD) from Vibrio cholerae serotype O1 (strain ATCC 39315 / El Tor Inaba N16961).